The primary structure comprises 520 residues: Bifunctional dihydrofolate reductase-thymidylate synthase (520 aa).

The DHFR domain occupies 26 to 229 (AFSIVVALDM…LEFEICKYVP (204 aa)). Val-30 contacts substrate. Residues Ala-32 and 38–44 (GIGDGES) contribute to the NADP(+) site. Asp-52 serves as a coordination point for substrate. Residues 81 to 83 (RKT), 102 to 105 (LSSK), and 157 to 164 (GGAQVYAD) contribute to the NADP(+) site. Positions 162 and 180 each coordinate substrate. Positions 234–520 (ERQYLELIDR…HPAIKMEMAV (287 aa)) are thymidylate synthase. Residue Arg-254 participates in dUMP binding. Residue Cys-400 is part of the active site. DUMP-binding positions include His-401, 421–425 (QRSCD), Asn-433, and 463–465 (HVY).

The protein in the N-terminal section; belongs to the dihydrofolate reductase family. In the C-terminal section; belongs to the thymidylate synthase family.

The catalysed reaction is (6S)-5,6,7,8-tetrahydrofolate + NADP(+) = 7,8-dihydrofolate + NADPH + H(+). It catalyses the reaction dUMP + (6R)-5,10-methylene-5,6,7,8-tetrahydrofolate = 7,8-dihydrofolate + dTMP. It functions in the pathway cofactor biosynthesis; tetrahydrofolate biosynthesis; 5,6,7,8-tetrahydrofolate from 7,8-dihydrofolate: step 1/1. Bifunctional enzyme. Involved in de novo dTMP biosynthesis. Key enzyme in folate metabolism. Catalyzes an essential reaction for de novo glycine and purine synthesis, DNA precursor synthesis, and for the conversion of dUMP to dTMP. In Leishmania major, this protein is Bifunctional dihydrofolate reductase-thymidylate synthase.